A 630-amino-acid chain; its full sequence is Probable potassium transport system protein Kup (630 aa).

The next 12 helical transmembrane spans lie at 17-37, 51-71, 105-125, 144-164, 175-195, 218-238, 255-275, 283-303, 344-364, 374-394, 402-422, and 428-448; these read LAIA…LYSL, PSAI…VVGI, ITGL…GDAV, PQLS…LFWI, LFGP…VYHI, VLLA…AEAL, YVLV…LLLL, PFFL…STVA, IYVP…VIGF, YGIA…VVMV, LLVA…FGAN, and QGGW…MTWY.

Belongs to the HAK/KUP transporter (TC 2.A.72) family.

Its subcellular location is the cell inner membrane. It carries out the reaction K(+)(in) + H(+)(in) = K(+)(out) + H(+)(out). Its function is as follows. Transport of potassium into the cell. Likely operates as a K(+):H(+) symporter. This Burkholderia thailandensis (strain ATCC 700388 / DSM 13276 / CCUG 48851 / CIP 106301 / E264) protein is Probable potassium transport system protein Kup.